A 230-amino-acid chain; its full sequence is Response regulator MprA (230 aa).

Positions 4–118 (RILVVDDDRA…ELLARMRALL (115 aa)) constitute a Response regulatory domain. Asp-48 carries the 4-aspartylphosphate modification. The segment at residues 129–227 (SPALTFLDLT…VRGVGYVLRE (99 aa)) is a DNA-binding region (ompR/PhoB-type).

Post-translationally, phosphorylated and dephosphorylated by MprB.

Its subcellular location is the cytoplasm. In terms of biological role, member of the two-component regulatory system MprB/MprA which contributes to maintaining a balance among several systems involved in stress resistance and is required for establishment and maintenance of persistent infection in the host. Functions as a transcriptional regulator that recognizes a 19-bp nucleotide motif comprizing two loosely conserved 8-bp direct DNA-binding motif repeats separated by a 3-bp spacer region. The polypeptide is Response regulator MprA (mprA) (Mycobacterium sp. (strain JLS)).